The sequence spans 67 residues: Sperm protamine P1 (67 aa).

Residues Met1–Lys67 form a disordered region. 2 stretches are compositionally biased toward basic residues: residues Ser7 to Val25 and Arg34 to Lys67.

Belongs to the protamine P1 family. Testis.

The protein localises to the nucleus. It is found in the chromosome. Its function is as follows. Protamines substitute for histones in the chromatin of sperm during the haploid phase of spermatogenesis. They compact sperm DNA into a highly condensed, stable and inactive complex. The sequence is that of Sperm protamine P1 (PRM1) from Isoodon macrourus (Short-nosed bandicoot).